A 341-amino-acid polypeptide reads, in one-letter code: N-acetyl-gamma-glutamyl-phosphate reductase (341 aa).

Residue Cys147 is part of the active site.

It belongs to the NAGSA dehydrogenase family. Type 1 subfamily.

The protein localises to the cytoplasm. It catalyses the reaction N-acetyl-L-glutamate 5-semialdehyde + phosphate + NADP(+) = N-acetyl-L-glutamyl 5-phosphate + NADPH + H(+). Its pathway is amino-acid biosynthesis; L-arginine biosynthesis; N(2)-acetyl-L-ornithine from L-glutamate: step 3/4. Its function is as follows. Catalyzes the NADPH-dependent reduction of N-acetyl-5-glutamyl phosphate to yield N-acetyl-L-glutamate 5-semialdehyde. The polypeptide is N-acetyl-gamma-glutamyl-phosphate reductase (Dehalococcoides mccartyi (strain CBDB1)).